A 396-amino-acid chain; its full sequence is Ribosomal RNA large subunit methyltransferase I (396 aa).

The PUA domain maps to 2–81 (SVRLVLAKGR…ESIDIAFFSR (80 aa)).

The protein belongs to the methyltransferase superfamily. RlmI family.

It is found in the cytoplasm. It carries out the reaction cytidine(1962) in 23S rRNA + S-adenosyl-L-methionine = 5-methylcytidine(1962) in 23S rRNA + S-adenosyl-L-homocysteine + H(+). In terms of biological role, specifically methylates the cytosine at position 1962 (m5C1962) of 23S rRNA. The sequence is that of Ribosomal RNA large subunit methyltransferase I from Shigella flexneri.